The sequence spans 129 residues: Large ribosomal subunit protein bL21 (129 aa).

The interval 102–129 (TDNAKPTKGPRPKKEKVAKEATKEDAAA) is disordered. Basic and acidic residues predominate over residues 116–129 (EKVAKEATKEDAAA).

Belongs to the bacterial ribosomal protein bL21 family. Part of the 50S ribosomal subunit. Contacts protein L20.

Functionally, this protein binds to 23S rRNA in the presence of protein L20. The polypeptide is Large ribosomal subunit protein bL21 (Bradyrhizobium diazoefficiens (strain JCM 10833 / BCRC 13528 / IAM 13628 / NBRC 14792 / USDA 110)).